Reading from the N-terminus, the 134-residue chain is Cytochrome b (134 aa).

3 consecutive transmembrane segments (helical) span residues 33–53, 77–98, and 113–133; these read FGSL…FLAM, WLLR…YLHV, and WNIG…GYVL. Positions 83 and 97 each coordinate heme b.

Belongs to the cytochrome b family. In terms of assembly, the cytochrome bc1 complex contains 11 subunits: 3 respiratory subunits (MT-CYB, CYC1 and UQCRFS1), 2 core proteins (UQCRC1 and UQCRC2) and 6 low-molecular weight proteins (UQCRH/QCR6, UQCRB/QCR7, UQCRQ/QCR8, UQCR10/QCR9, UQCR11/QCR10 and a cleavage product of UQCRFS1). This cytochrome bc1 complex then forms a dimer. Heme b is required as a cofactor.

It localises to the mitochondrion inner membrane. In terms of biological role, component of the ubiquinol-cytochrome c reductase complex (complex III or cytochrome b-c1 complex) that is part of the mitochondrial respiratory chain. The b-c1 complex mediates electron transfer from ubiquinol to cytochrome c. Contributes to the generation of a proton gradient across the mitochondrial membrane that is then used for ATP synthesis. The polypeptide is Cytochrome b (MT-CYB) (Chiroderma salvini (Salvin's big-eyed bat)).